The sequence spans 190 residues: Threonylcarbamoyl-AMP synthase (190 aa).

One can recognise a YrdC-like domain in the interval 7–190 (SEAVAHAVAV…ALTGELFRQG (184 aa)).

It belongs to the SUA5 family. TsaC subfamily.

The protein localises to the cytoplasm. It carries out the reaction L-threonine + hydrogencarbonate + ATP = L-threonylcarbamoyladenylate + diphosphate + H2O. Functionally, required for the formation of a threonylcarbamoyl group on adenosine at position 37 (t(6)A37) in tRNAs that read codons beginning with adenine. Catalyzes the conversion of L-threonine, HCO(3)(-)/CO(2) and ATP to give threonylcarbamoyl-AMP (TC-AMP) as the acyladenylate intermediate, with the release of diphosphate. The chain is Threonylcarbamoyl-AMP synthase from Klebsiella pneumoniae subsp. pneumoniae (strain ATCC 700721 / MGH 78578).